The following is a 166-amino-acid chain: Small ribosomal subunit protein uS5 (166 aa).

The S5 DRBM domain maps to 11–74; that stretch reads LIEKLVSVKR…ENAKKNMVSV (64 aa).

Belongs to the universal ribosomal protein uS5 family. In terms of assembly, part of the 30S ribosomal subunit. Contacts proteins S4 and S8.

In terms of biological role, with S4 and S12 plays an important role in translational accuracy. Functionally, located at the back of the 30S subunit body where it stabilizes the conformation of the head with respect to the body. In Francisella tularensis subsp. holarctica (strain LVS), this protein is Small ribosomal subunit protein uS5.